The primary structure comprises 506 residues: Trans-cinnamate 4-monooxygenase (506 aa).

Residues 3–23 (LLLLEKTLLALFIAATIAVTI) traverse the membrane as a helical segment. (E)-cinnamate is bound by residues 213-218 (RSRLAQ) and alanine 307. Cysteine 448 contributes to the heme binding site.

This sequence belongs to the cytochrome P450 family. It depends on heme as a cofactor.

It is found in the membrane. It carries out the reaction (E)-cinnamate + reduced [NADPH--hemoprotein reductase] + O2 = (E)-4-coumarate + oxidized [NADPH--hemoprotein reductase] + H2O + H(+). It functions in the pathway phenylpropanoid metabolism; trans-4-coumarate biosynthesis; trans-4-coumarate from trans-cinnamate: step 1/1. In terms of biological role, catalyzes the first oxidative step of the phenylpropanoid pathway in higher plants by transforming trans-cinnamate into p-coumarate. The compounds formed by this pathway are essential components for lignification, pollination, and defense against ultraviolet light, predators and pathogens. The sequence is that of Trans-cinnamate 4-monooxygenase (CYP73A3) from Medicago sativa (Alfalfa).